The primary structure comprises 322 residues: F-box protein At2g16300 (322 aa).

The region spanning 2-50 is the F-box domain; sequence ADWSLLPNDLLELIVGHLETSFEIVLFRSVCSSWRSVVPPQDQSRCLSI.

The protein is F-box protein At2g16300 of Arabidopsis thaliana (Mouse-ear cress).